The primary structure comprises 295 residues: 3-hydroxy-5-phosphonooxypentane-2,4-dione thiolase (295 aa).

The active-site Schiff-base intermediate with substrate is Lys-203.

It belongs to the DeoC/FbaB aldolase family. Homodecamer.

It is found in the cytoplasm. The catalysed reaction is dihydroxyacetone phosphate + acetyl-CoA = 3-hydroxy-2,4-dioxopentyl phosphate + CoA. Its function is as follows. Involved in the degradation of phospho-AI-2, thereby terminating induction of the lsr operon and closing the AI-2 signaling cycle. Catalyzes the transfer of an acetyl moiety from 3-hydroxy-5-phosphonooxypentane-2,4-dione to CoA to form glycerone phosphate and acetyl-CoA. This is 3-hydroxy-5-phosphonooxypentane-2,4-dione thiolase from Klebsiella pneumoniae subsp. pneumoniae (strain ATCC 700721 / MGH 78578).